The following is a 235-amino-acid chain: Ubiquinone biosynthesis O-methyltransferase (235 aa).

Arg39, Gly59, Asp80, and Met124 together coordinate S-adenosyl-L-methionine.

This sequence belongs to the methyltransferase superfamily. UbiG/COQ3 family.

It carries out the reaction a 3-demethylubiquinol + S-adenosyl-L-methionine = a ubiquinol + S-adenosyl-L-homocysteine + H(+). The enzyme catalyses a 3-(all-trans-polyprenyl)benzene-1,2-diol + S-adenosyl-L-methionine = a 2-methoxy-6-(all-trans-polyprenyl)phenol + S-adenosyl-L-homocysteine + H(+). It participates in cofactor biosynthesis; ubiquinone biosynthesis. Its function is as follows. O-methyltransferase that catalyzes the 2 O-methylation steps in the ubiquinone biosynthetic pathway. This chain is Ubiquinone biosynthesis O-methyltransferase, found in Vibrio parahaemolyticus serotype O3:K6 (strain RIMD 2210633).